The primary structure comprises 576 residues: Arginine--tRNA ligase (576 aa).

Positions 122–132 (PNVAKEMHVGH) match the 'HIGH' region motif.

Belongs to the class-I aminoacyl-tRNA synthetase family. As to quaternary structure, monomer.

It localises to the cytoplasm. The catalysed reaction is tRNA(Arg) + L-arginine + ATP = L-arginyl-tRNA(Arg) + AMP + diphosphate. This chain is Arginine--tRNA ligase, found in Mannheimia succiniciproducens (strain KCTC 0769BP / MBEL55E).